The chain runs to 444 residues: Elongation factor 1-alpha (444 aa).

Positions 15-236 constitute a tr-type G domain; sequence KPHINLAVVG…VLDTFQPPPR (222 aa). The interval 24–31 is G1; sequence GHVDNGKS. 24-31 contacts GTP; it reads GHVDNGKS. Residue Ser-31 coordinates Mg(2+). Positions 80–84 are G2; it reads GVTIE. The segment at 101 to 104 is G3; that stretch reads DLPG. GTP-binding positions include 101-105 and 163-166; these read DLPGH and NKMD. A G4 region spans residues 163-166; that stretch reads NKMD. The G5 stretch occupies residues 202 to 204; that stretch reads SAI.

The protein belongs to the TRAFAC class translation factor GTPase superfamily. Classic translation factor GTPase family. EF-Tu/EF-1A subfamily.

It is found in the cytoplasm. It catalyses the reaction GTP + H2O = GDP + phosphate + H(+). GTP hydrolase that promotes the GTP-dependent binding of aminoacyl-tRNA to the A-site of ribosomes during protein biosynthesis. The protein is Elongation factor 1-alpha of Pyrobaculum calidifontis (strain DSM 21063 / JCM 11548 / VA1).